Consider the following 182-residue polypeptide: UPF0254 protein MK0012 (182 aa).

This sequence belongs to the UPF0254 family.

This chain is UPF0254 protein MK0012, found in Methanopyrus kandleri (strain AV19 / DSM 6324 / JCM 9639 / NBRC 100938).